We begin with the raw amino-acid sequence, 916 residues long: DNA mismatch repair protein MutS (916 aa).

665-672 (GPNMAGKS) contacts ATP.

It belongs to the DNA mismatch repair MutS family.

In terms of biological role, this protein is involved in the repair of mismatches in DNA. It is possible that it carries out the mismatch recognition step. This protein has a weak ATPase activity. The protein is DNA mismatch repair protein MutS of Bradyrhizobium sp. (strain ORS 278).